Consider the following 231-residue polypeptide: Transmembrane protein 225 (231 aa).

The Cytoplasmic segment spans residues 1 to 13 (MVHILVRKVEATN). Residues 14 to 34 (MFFSSWTLVFLAVGIIIEEWA) form a helical membrane-spanning segment. The Extracellular segment spans residues 35 to 67 (ELKLGPQKPTITHSPWICCTPLWPSDGLEVIRN). A helical transmembrane segment spans residues 68–88 (ILIVVLSLSFMHNLLLGFEFT). Residues 89–97 (YMIPQTKYT) lie on the Cytoplasmic side of the membrane. Residues 98–118 (LIMTACLAFLTGILLLGALLL) traverse the membrane as a helical segment. Topologically, residues 119–135 (YHHMLRQGESVYYSSYK) are extracellular. A helical membrane pass occupies residues 136-156 (ISWIIFTAYLNVLFLFISGFL). Residues 157-231 (SLLQYKQPID…IQARRVTWAL (75 aa)) lie on the Cytoplasmic side of the membrane. The RVxF signature appears at 225–229 (RRVTW).

As to quaternary structure, interacts (via RVxF motif) with PPP1CC.

The protein localises to the cytoplasmic vesicle. It localises to the secretory vesicle. It is found in the acrosome membrane. Functionally, probably inhibits protein phosphatase 1 (PP1) in sperm via binding to catalytic subunit PPP1CC. This chain is Transmembrane protein 225 (TMEM225), found in Bos taurus (Bovine).